Consider the following 98-residue polypeptide: YcgL domain-containing protein CJA_2437 (98 aa).

Residues 3–87 (IIAEIYRSPK…RDLVDAEAKR (85 aa)) form the YcgL domain.

The polypeptide is YcgL domain-containing protein CJA_2437 (Cellvibrio japonicus (strain Ueda107) (Pseudomonas fluorescens subsp. cellulosa)).